The chain runs to 346 residues: Autophagy-related protein 3 (346 aa).

The interval 85 to 161 (DFAGDAGHEE…DDDDEAIIRA (77 aa)) is flexible region. The active-site Glycyl thioester intermediate is Cys-238. A handle region region spans residues 242-322 (SVMKTLLDRA…DQEVAIRVDQ (81 aa)).

It belongs to the ATG3 family. In terms of assembly, monomer. Interacts with apg-6/atg8 through an intermediate thioester bond through the C-terminal Gly of apg-6/atg8. Also interacts with the 40 amino acid C-terminal region of the E1-like apg-5/atg7 enzyme. Also interacts with the atg12-apg-4/atg5 conjugate.

It is found in the cytoplasm. Functionally, E2 conjugating enzyme required for the cytoplasm to vacuole transport (Cvt) and autophagy. Required for selective autophagic degradation of the nucleus (nucleophagy) as well as for mitophagy which contributes to regulate mitochondrial quantity and quality by eliminating the mitochondria to a basal level to fulfill cellular energy requirements and preventing excess ROS production. Responsible for the E2-like covalent binding of phosphatidylethanolamine to the C-terminal Gly of apg-6/atg8. The atg12-apg-4/atg5 conjugate plays a role of an E3 and promotes the transfer of apg-6/atg8 from apg-3/atg3 to phosphatidylethanolamine (PE). This step is required for the membrane association of apg-6/atg8. The formation of the apg-6/atg8-phosphatidylethanolamine conjugate is essential for autophagy and for the cytoplasm to vacuole transport (Cvt). The apg-6/atg8-PE conjugate mediates tethering between adjacent membranes and stimulates membrane hemifusion, leading to expansion of the autophagosomal membrane during autophagy. This Neurospora crassa (strain ATCC 24698 / 74-OR23-1A / CBS 708.71 / DSM 1257 / FGSC 987) protein is Autophagy-related protein 3 (apg-3).